The primary structure comprises 365 residues: Aminomethyltransferase (365 aa).

Belongs to the GcvT family. The glycine cleavage system is composed of four proteins: P, T, L and H.

It catalyses the reaction N(6)-[(R)-S(8)-aminomethyldihydrolipoyl]-L-lysyl-[protein] + (6S)-5,6,7,8-tetrahydrofolate = N(6)-[(R)-dihydrolipoyl]-L-lysyl-[protein] + (6R)-5,10-methylene-5,6,7,8-tetrahydrofolate + NH4(+). In terms of biological role, the glycine cleavage system catalyzes the degradation of glycine. The chain is Aminomethyltransferase from Desulfitobacterium hafniense (strain Y51).